A 300-amino-acid chain; its full sequence is 4-hydroxy-tetrahydrodipicolinate synthase (300 aa).

T57 is a pyruvate binding site. Y145 acts as the Proton donor/acceptor in catalysis. K173 (schiff-base intermediate with substrate) is an active-site residue. I213 is a pyruvate binding site.

This sequence belongs to the DapA family. As to quaternary structure, homotetramer; dimer of dimers.

The protein localises to the cytoplasm. It carries out the reaction L-aspartate 4-semialdehyde + pyruvate = (2S,4S)-4-hydroxy-2,3,4,5-tetrahydrodipicolinate + H2O + H(+). The protein operates within amino-acid biosynthesis; L-lysine biosynthesis via DAP pathway; (S)-tetrahydrodipicolinate from L-aspartate: step 3/4. In terms of biological role, catalyzes the condensation of (S)-aspartate-beta-semialdehyde [(S)-ASA] and pyruvate to 4-hydroxy-tetrahydrodipicolinate (HTPA). This Corynebacterium urealyticum (strain ATCC 43042 / DSM 7109) protein is 4-hydroxy-tetrahydrodipicolinate synthase.